An 87-amino-acid polypeptide reads, in one-letter code: U-actitoxin-Avd3o (87 aa).

A signal peptide spans 1-16 (MVYLLCFFLVADVSYG). One can recognise a BPTI/Kunitz inhibitor domain in the interval 21–71 (CLLPKVVGFCRARFPRYYYNSSSRRCEKFNYGGCGGNANNFSSYYECHIKC). 3 disulfides stabilise this stretch: cysteine 21-cysteine 71, cysteine 30-cysteine 54, and cysteine 46-cysteine 67.

The protein belongs to the venom Kunitz-type family. Sea anemone type 2 potassium channel toxin subfamily.

It is found in the secreted. The protein localises to the nematocyst. In terms of biological role, serine protease inhibitor that inhibits both tissue and plasma kallikreins. Has hemolytic activity. Inhibits voltage-gated potassium channels (Kv). This chain is U-actitoxin-Avd3o, found in Anemonia viridis (Snakelocks anemone).